Consider the following 238-residue polypeptide: 1-(5-phosphoribosyl)-5-[(5-phosphoribosylamino)methylideneamino] imidazole-4-carboxamide isomerase (238 aa).

D8 acts as the Proton acceptor in catalysis. D129 serves as the catalytic Proton donor.

The protein belongs to the HisA/HisF family.

The protein resides in the cytoplasm. It carries out the reaction 1-(5-phospho-beta-D-ribosyl)-5-[(5-phospho-beta-D-ribosylamino)methylideneamino]imidazole-4-carboxamide = 5-[(5-phospho-1-deoxy-D-ribulos-1-ylimino)methylamino]-1-(5-phospho-beta-D-ribosyl)imidazole-4-carboxamide. The protein operates within amino-acid biosynthesis; L-histidine biosynthesis; L-histidine from 5-phospho-alpha-D-ribose 1-diphosphate: step 4/9. The sequence is that of 1-(5-phosphoribosyl)-5-[(5-phosphoribosylamino)methylideneamino] imidazole-4-carboxamide isomerase from Myxococcus xanthus (strain DK1622).